Consider the following 446-residue polypeptide: Argininosuccinate synthase (446 aa).

Residues 17-25 (AFSGGLDTS) and alanine 43 each bind ATP. L-citrulline is bound at residue tyrosine 99. Residues glycine 129 and threonine 131 each coordinate ATP. Threonine 131, asparagine 135, and aspartate 136 together coordinate L-aspartate. Asparagine 135 contacts L-citrulline. Aspartate 136 contacts ATP. The L-citrulline site is built by arginine 139 and serine 192. Aspartate 194 is a binding site for ATP. Positions 201, 203, and 280 each coordinate L-citrulline.

It belongs to the argininosuccinate synthase family. Type 2 subfamily. Homotetramer.

It is found in the cytoplasm. The enzyme catalyses L-citrulline + L-aspartate + ATP = 2-(N(omega)-L-arginino)succinate + AMP + diphosphate + H(+). It participates in amino-acid biosynthesis; L-arginine biosynthesis; L-arginine from L-ornithine and carbamoyl phosphate: step 2/3. This is Argininosuccinate synthase from Methylibium petroleiphilum (strain ATCC BAA-1232 / LMG 22953 / PM1).